We begin with the raw amino-acid sequence, 109 residues long: UPF0060 membrane protein YfjF (109 aa).

Transmembrane regions (helical) follow at residues 6-26 (ILLF…VWLW), 32-52 (PAGY…LPTF), 61-81 (VYAA…WLVD), and 87-107 (LYDW…LFAP).

It belongs to the UPF0060 family.

It localises to the cell membrane. The polypeptide is UPF0060 membrane protein YfjF (yfjF) (Bacillus subtilis (strain 168)).